The following is a 147-amino-acid chain: Protein archease (147 aa).

Ca(2+) contacts are provided by Asp-17, Asp-146, and Ile-147.

Belongs to the archease family.

Activates the tRNA-splicing ligase complex by facilitating the enzymatic turnover of catalytic subunit RtcB. Acts by promoting the guanylylation of RtcB, a key intermediate step in tRNA ligation. Can also alter the NTP specificity of RtcB such that ATP, dGTP or ITP is used efficiently. The polypeptide is Protein archease (Pyrobaculum calidifontis (strain DSM 21063 / JCM 11548 / VA1)).